A 132-amino-acid chain; its full sequence is MAVNDPIADMLTRIRNAVMAKHERVEIPHSKMKVEIARILKEEGYVRDYAVRGSGPQQRIVIELKYGPDGERAITGLRRMSRPGRRVYRKQKDIPRVLDGLGVAILSTSQGILTDHEARRKGVGGEVLCFVY.

It belongs to the universal ribosomal protein uS8 family. In terms of assembly, part of the 30S ribosomal subunit. Contacts proteins S5 and S12.

Functionally, one of the primary rRNA binding proteins, it binds directly to 16S rRNA central domain where it helps coordinate assembly of the platform of the 30S subunit. The polypeptide is Small ribosomal subunit protein uS8 (Rubrobacter xylanophilus (strain DSM 9941 / JCM 11954 / NBRC 16129 / PRD-1)).